We begin with the raw amino-acid sequence, 548 residues long: Phenylalanine--tRNA ligase beta subunit (548 aa).

One can recognise a B5 domain in the interval L275–G350. Residues D328, D334, E337, and E338 each coordinate Mg(2+).

This sequence belongs to the phenylalanyl-tRNA synthetase beta subunit family. Type 2 subfamily. Tetramer of two alpha and two beta subunits. Requires Mg(2+) as cofactor.

The protein localises to the cytoplasm. The catalysed reaction is tRNA(Phe) + L-phenylalanine + ATP = L-phenylalanyl-tRNA(Phe) + AMP + diphosphate + H(+). The protein is Phenylalanine--tRNA ligase beta subunit of Methanocaldococcus jannaschii (strain ATCC 43067 / DSM 2661 / JAL-1 / JCM 10045 / NBRC 100440) (Methanococcus jannaschii).